Consider the following 367-residue polypeptide: MSRQSFSLLKNLRSIASGSKIQTRSVTYMPRPGDGKPRPVTLIPGDGVGPLVTNAVQQVMEAMHAPVYFEPFEVHGDMKSLPEGLLESIKKNKVCLKGGLKTPVGGGVSSLNVNLRKELDLFASLVNCFNLPGLASRHENVDIVVIRENTEGEYAGLEHEVVPGVVESLKVITKFCSERIAKYAFEYAYLNNRKKVTAVHKANIMKLADGLFLESCQEVAKKYPSIAYNEIIVDNCCMQLVARPEQFDVMVTPNLYGNLVANTAAGIAGGTGVMPGGNVGAEYAVFEQGASAGNVGKDTTEEQKNANPVALLLSSAMMLRHLQFPSFADRLETAVKRVIAEGNCRTEDLGGNSTTQEVVDAVIANLD.

A mitochondrion-targeting transit peptide spans 1–25; sequence MSRQSFSLLKNLRSIASGSKIQTRS.

The protein belongs to the isocitrate and isopropylmalate dehydrogenases family. In terms of assembly, heterooligomer of catalytic and regulatory subunits. In terms of tissue distribution, ubiquitous. Predominantly expressed in roots, stems and leaves.

Its subcellular location is the mitochondrion. In terms of biological role, performs an essential role in the oxidative function of the citric acid cycle. The protein is Isocitrate dehydrogenase [NAD] regulatory subunit 2, mitochondrial (IDH2) of Arabidopsis thaliana (Mouse-ear cress).